The primary structure comprises 293 residues: 4-hydroxy-tetrahydrodipicolinate synthase 1 (293 aa).

T46 is a pyruvate binding site. The active-site Proton donor/acceptor is the Y134. Residue K162 is the Schiff-base intermediate with substrate of the active site. Residue I204 participates in pyruvate binding.

Belongs to the DapA family. In terms of assembly, homotetramer; dimer of dimers.

Its subcellular location is the cytoplasm. It carries out the reaction L-aspartate 4-semialdehyde + pyruvate = (2S,4S)-4-hydroxy-2,3,4,5-tetrahydrodipicolinate + H2O + H(+). Its pathway is amino-acid biosynthesis; L-lysine biosynthesis via DAP pathway; (S)-tetrahydrodipicolinate from L-aspartate: step 3/4. Functionally, catalyzes the condensation of (S)-aspartate-beta-semialdehyde [(S)-ASA] and pyruvate to 4-hydroxy-tetrahydrodipicolinate (HTPA). The protein is 4-hydroxy-tetrahydrodipicolinate synthase 1 of Clostridium acetobutylicum (strain ATCC 824 / DSM 792 / JCM 1419 / IAM 19013 / LMG 5710 / NBRC 13948 / NRRL B-527 / VKM B-1787 / 2291 / W).